A 147-amino-acid polypeptide reads, in one-letter code: Protein phosphatase 1 regulatory subunit 14A (147 aa).

Basic residues predominate over residues 1–11 (MAAQRLGKRVL). The disordered stretch occupies residues 1–37 (MAAQRLGKRVLSKLQSPSRARGPGGSPGGLQKRHARV). Residue S26 is modified to Phosphoserine. Residues 35–120 (ARVTVKYDRR…LLAKLQGLHR (86 aa)) form an inhibitory region. Position 38 is a phosphothreonine; by PKC (T38). A disordered region spans residues 118–147 (LHRQPGLRQPSPSHDGSLSPLQDRARTAHP). A compositionally biased stretch (polar residues) spans 127–137 (PSPSHDGSLSP). 3 positions are modified to phosphoserine: S128, S134, and S136.

The protein belongs to the PP1 inhibitor family. As to expression, isoform 1 is detected in aorta and testis. Isoform 2 is detected in aorta.

The protein localises to the cytoplasm. Its function is as follows. Inhibitor of PPP1CA. Has over 1000-fold higher inhibitory activity when phosphorylated, creating a molecular switch for regulating the phosphorylation status of PPP1CA substrates and smooth muscle contraction. The polypeptide is Protein phosphatase 1 regulatory subunit 14A (PPP1R14A) (Homo sapiens (Human)).